The sequence spans 133 residues: S-protein homolog 9 (133 aa).

An N-terminal signal peptide occupies residues 1–20 (MNRLSCFLLVIGLCIGLSNA).

Belongs to the plant self-incompatibility (S1) protein family.

It is found in the secreted. The sequence is that of S-protein homolog 9 from Arabidopsis thaliana (Mouse-ear cress).